The following is a 1104-amino-acid chain: Extended synaptotagmin-1 (1104 aa).

M1 carries the N-acetylmethionine modification. At 1 to 38 (MERSPGEGPSPSPTDQPSAPSDPTGQPPAAHAKPDPGS) the chain is on the cytoplasmic side. The segment at 1 to 47 (MERSPGEGPSPSPTDQPSAPSDPTGQPPAAHAKPDPGSGGQPAGPGA) is disordered. The span at 15–24 (DQPSAPSDPT) shows a compositional bias: polar residues. Residues 37–47 (GSGGQPAGPGA) show a composition bias toward gly residues. The helical transmembrane segment at 39–59 (GGQPAGPGAAGEALAVLTSFG) threads the bilayer. At 60-62 (KRL) the chain is on the lumenal side. Residues 63 to 83 (LVLIPVYLAGAVGLSVGFVLF) traverse the membrane as a helical segment. At 84–1104 (GLALYLGWRR…LMDDKDKGSS (1021 aa)) the chain is on the cytoplasmic side. Residues 91-116 (WRRVRDEKERSLRAARQLLDDEEQLT) adopt a coiled-coil conformation. Positions 135–313 (DVEKAEWLNK…LPNRLLVPLV (179 aa)) constitute an SMP-LTD domain. 4 C2 domains span residues 312 to 433 (LVPD…DDWF), 460 to 580 (QVLQ…QLSS), 627 to 751 (SVDA…DEWL), and 777 to 899 (LEEV…TLNS). S324 bears the Phosphoserine; by CDK5 mark. The Ca(2+) site is built by K344, D345, D357, D404, D406, D408, D410, and D411. Disordered regions lie at residues 617 to 641 (VDSE…TPDS), 813 to 833 (RKGT…TSHK), and 924 to 950 (SHSY…VTSS). K817 carries the post-translational modification N6-acetyllysine. Residues S820 and S941 each carry the phosphoserine modification. Residues 925-946 (HSYSHSSSSLSEEPELSGGPPH) are compositionally biased toward low complexity. T948 is modified (phosphothreonine). S949 and S963 each carry phosphoserine. The 123-residue stretch at 971-1093 (PLGQVKLTVW…DLSQGVARWY (123 aa)) folds into the C2 5 domain. Y1009 carries the phosphotyrosine modification. The required for phosphatidylinositol 4,5-bisphosphate-dependent location at the cell membrane stretch occupies residues 1018–1025 (KNRGTKRK). S1034 is modified (phosphoserine).

It belongs to the extended synaptotagmin family. Interacts with ESYT2 and ESYT3. Interacts with ADGRD1; inhibiting the G-protein-coupled receptor activity of ADGRD1. Interaction with ADGRD1 is abolished when cytosolic calcium increases, relieving ADGRD1 G-protein-coupled receptor activity. Interacts (phosphorylated form) with SLC2A4. In terms of processing, phosphorylated on Ser residues in insulin-treated adipocytes (in vitro); this promotes interaction with SLC2A4.

The protein resides in the endoplasmic reticulum membrane. Its subcellular location is the cell membrane. Functionally, binds calcium (via the C2 domains) and translocates to sites of contact between the endoplasmic reticulum and the cell membrane in response to increased cytosolic calcium levels. Helps tether the endoplasmic reticulum to the cell membrane and promotes the formation of appositions between the endoplasmic reticulum and the cell membrane. Acts as an inhibitor of ADGRD1 G-protein-coupled receptor activity in absence of cytosolic calcium. Binds glycerophospholipids in a barrel-like domain and may play a role in cellular lipid transport. The polypeptide is Extended synaptotagmin-1 (ESYT1) (Pongo abelii (Sumatran orangutan)).